We begin with the raw amino-acid sequence, 94 residues long: MRTIAILAAILLVALQAQAESLQERADEATTQKQSGEDNQDLAISFAGNGLSALRTSGSQARATCYCRIGHCTILESLSGVCEISGRLYRLCCR.

The signal sequence occupies residues 1-19; that stretch reads MRTIAILAAILLVALQAQA. 3 disulfides stabilise this stretch: Cys65-Cys93, Cys67-Cys82, and Cys72-Cys92.

This sequence belongs to the alpha-defensin family. As to quaternary structure, homodimer. Homotetramer. Interacts with B.antracis lef/lethal factor. Post-translationally, glycosylated. Proteolytically cleaved at Arg-62 by trypsin. Both the propeptide form proHD5/HD5(20-94) and HD5(56-94) are cleaved into the lumenal peptide form HD5(63-94) by trypsin. Unprocessed proHD5 exerts antimicrobial activities, but peptide potency is enhanced by peptide processing. Proteolytically cleaved in duodenal fluid; derived fragments are antimicrobially active against commensal bacteria (in vitro).

It is found in the secreted. The protein localises to the cytoplasmic vesicle. It localises to the secretory vesicle. Its function is as follows. Host-defense peptide that maintains sterility in the urogenital system. Has antimicrobial activity against a wide range of bacteria, including Gram-negative E.coli, P.aeruginosa and S.typhimurium, and Gram-positive E.aerogenes, S.aureus, B.cereus, E.faecium and L.monocytogenes. Confers resistance to intestinal infection by S.typhimurium. Exhibits antimicrobial activity against enteric commensal bacteria such as B.adolescentis, L.acidophilus, B.breve, L.fermentum, B.longum and S.thermophilus. Binds to bacterial membranes and causes membrane disintegration. Induces the secretion of the chemokine IL-8 by intestinal epithelial cells. Binds to B.antracis lef/lethal factor, a major virulence factor from B.anthracis, and neutralizes its enzymatic activity. This Pan troglodytes (Chimpanzee) protein is Defensin alpha 5 (DEFA5).